Reading from the N-terminus, the 161-residue chain is Nucleotide-binding protein Rmet_2899 (161 aa).

Belongs to the YajQ family.

Nucleotide-binding protein. This Cupriavidus metallidurans (strain ATCC 43123 / DSM 2839 / NBRC 102507 / CH34) (Ralstonia metallidurans) protein is Nucleotide-binding protein Rmet_2899.